The following is a 255-amino-acid chain: Altered inheritance of mitochondria protein 36, mitochondrial (255 aa).

A mitochondrion-targeting transit peptide spans 1-40; that stretch reads MLRPLRKSVLASCRHCFKVCGGLPQKQLPLFSPLLLRARY. A helical membrane pass occupies residues 64-82; that stretch reads IFLVAIIGTVIFVKTVQSL.

It belongs to the AIM36 family.

It is found in the mitochondrion membrane. The polypeptide is Altered inheritance of mitochondria protein 36, mitochondrial (AIM36) (Saccharomyces cerevisiae (strain RM11-1a) (Baker's yeast)).